The following is a 403-amino-acid chain: Eukaryotic translation initiation factor 3 subunit H (403 aa).

Positions 57-206 (VRLDGLALTK…VKAYRLSPSF (150 aa)) constitute an MPN domain. Residues 99 to 122 (ALPNPGRSNSERDEEEDRSSRNAT) form a disordered region.

This sequence belongs to the eIF-3 subunit H family. In terms of assembly, component of the eukaryotic translation initiation factor 3 (eIF-3) complex.

Its subcellular location is the cytoplasm. Functionally, component of the eukaryotic translation initiation factor 3 (eIF-3) complex, which is involved in protein synthesis of a specialized repertoire of mRNAs and, together with other initiation factors, stimulates binding of mRNA and methionyl-tRNAi to the 40S ribosome. The eIF-3 complex specifically targets and initiates translation of a subset of mRNAs involved in cell proliferation. The polypeptide is Eukaryotic translation initiation factor 3 subunit H (Mycosarcoma maydis (Corn smut fungus)).